The chain runs to 258 residues: Flagellin B3 (258 aa).

The propeptide occupies 1–8; the sequence is MRFLKKRG.

This sequence belongs to the archaeal flagellin family.

It localises to the archaeal flagellum. Its function is as follows. Flagellin is the subunit protein which polymerizes to form the filaments of archaeal flagella. This is Flagellin B3 (flaB3) from Thermococcus kodakarensis (strain ATCC BAA-918 / JCM 12380 / KOD1) (Pyrococcus kodakaraensis (strain KOD1)).